The sequence spans 705 residues: Phycobiliprotein ApcE (705 aa).

The phycobilin-like 1 stretch occupies residues 18–76; it reads QTVPGSTIVQAEQQDRFPQQGELRELSSYFQSGLKRLAIAEIITRNSDTIVSRAANRIF. Positions 77–145 are phycobilin-like loop; that stretch reads VGGSPLAYIE…VRIPSGFRPI (69 aa). Residues 146–238 form a phycobilin-like 2 region; sequence NVARYGPRNM…YFDVLIREFE (93 aa). A (2R,3E)-phycocyanobilin-binding site is contributed by cysteine 196. PBS-linker domains are found at residues 253-433 and 514-691; these read DQQG…FVKV and KIFK…SLRP. Residues 685–705 are disordered; sequence VKASLRPAAGAQERRPEVGRR. Over residues 696–705 the composition is skewed to basic and acidic residues; it reads QERRPEVGRR.

Belongs to the phycobilisome linker protein family. As to quaternary structure, phycobilisomes of this organism are composed of a two cylinder core, from which six rods radiate. The core is mainly composed of allophycocyanin alpha and beta chains, and of three minor components: the allophycocyanin alpha-B chain, a 18.3 kDa polypeptide, and the anchor polypeptide L-CM. In terms of processing, contains one covalently linked bilin chromophore. This protein autochromophorylates.

The protein resides in the cellular thylakoid membrane. This protein is postulated to act both as terminal energy acceptor (by its phycobilin-like domains) and as a linker polypeptide (by its repeats and arms) that stabilizes the phycobilisome core architecture. Has intrinsic bilin lyase activity. The protein is Phycobiliprotein ApcE (apcE) of Synechococcus sp. (strain ATCC 27144 / PCC 6301 / SAUG 1402/1) (Anacystis nidulans).